The sequence spans 333 residues: tRNA N6-adenosine threonylcarbamoyltransferase (333 aa).

Residues histidine 108 and histidine 112 each contribute to the Fe cation site. Residues 129 to 133 (LVSGG), aspartate 161, glutamate 178, and serine 258 contribute to the substrate site. A Fe cation-binding site is contributed by aspartate 286.

Belongs to the KAE1 / TsaD family. The cofactor is Fe(2+).

The protein localises to the cytoplasm. The catalysed reaction is L-threonylcarbamoyladenylate + adenosine(37) in tRNA = N(6)-L-threonylcarbamoyladenosine(37) in tRNA + AMP + H(+). Functionally, required for the formation of a threonylcarbamoyl group on adenosine at position 37 (t(6)A37) in tRNAs that read codons beginning with adenine. Is probably involved in the transfer of the threonylcarbamoyl moiety of threonylcarbamoyl-AMP (TC-AMP) to the N6 group of A37. The chain is tRNA N6-adenosine threonylcarbamoyltransferase from Pyrobaculum islandicum (strain DSM 4184 / JCM 9189 / GEO3).